Here is a 206-residue protein sequence, read N- to C-terminus: dTTP/UTP pyrophosphatase (206 aa).

The active-site Proton acceptor is the Asp-87.

This sequence belongs to the Maf family. YhdE subfamily. A divalent metal cation serves as cofactor.

Its subcellular location is the cytoplasm. It catalyses the reaction dTTP + H2O = dTMP + diphosphate + H(+). The enzyme catalyses UTP + H2O = UMP + diphosphate + H(+). In terms of biological role, nucleoside triphosphate pyrophosphatase that hydrolyzes dTTP and UTP. May have a dual role in cell division arrest and in preventing the incorporation of modified nucleotides into cellular nucleic acids. The protein is dTTP/UTP pyrophosphatase of Aromatoleum aromaticum (strain DSM 19018 / LMG 30748 / EbN1) (Azoarcus sp. (strain EbN1)).